Here is a 167-residue protein sequence, read N- to C-terminus: Ribosome maturation factor RimM (167 aa).

A PRC barrel domain is found at 92-166 (DGVYYYRELL…EVRVELMEGL (75 aa)).

The protein belongs to the RimM family. In terms of assembly, binds ribosomal protein uS19.

The protein resides in the cytoplasm. In terms of biological role, an accessory protein needed during the final step in the assembly of 30S ribosomal subunit, possibly for assembly of the head region. Essential for efficient processing of 16S rRNA. May be needed both before and after RbfA during the maturation of 16S rRNA. It has affinity for free ribosomal 30S subunits but not for 70S ribosomes. This is Ribosome maturation factor RimM from Lactobacillus delbrueckii subsp. bulgaricus (strain ATCC 11842 / DSM 20081 / BCRC 10696 / JCM 1002 / NBRC 13953 / NCIMB 11778 / NCTC 12712 / WDCM 00102 / Lb 14).